Consider the following 230-residue polypeptide: Ribonuclease 3 (230 aa).

The 116-residue stretch at 19–134 folds into the RNase III domain; the sequence is ELLTIALTHR…LLGAIYLEHG (116 aa). Glutamate 44 contributes to the Mg(2+) binding site. The active site involves aspartate 48. Mg(2+) is bound by residues aspartate 120 and glutamate 123. The DRBM domain occupies 161–229; sequence DWKSSLQELT…AASAYKTLDE (69 aa).

The protein belongs to the ribonuclease III family. In terms of assembly, homodimer. Requires Mg(2+) as cofactor.

It localises to the cytoplasm. The catalysed reaction is Endonucleolytic cleavage to 5'-phosphomonoester.. Its function is as follows. Digests double-stranded RNA. Involved in the processing of primary rRNA transcript to yield the immediate precursors to the all rRNAs (23S, 16S and 5S). Processes some mRNAs, and tRNAs when they are encoded in the rRNA operon. Processes pre-crRNA and tracrRNA of type II CRISPR loci if present in the organism. The protein is Ribonuclease 3 (rnc) of Mycolicibacterium smegmatis (strain ATCC 700084 / mc(2)155) (Mycobacterium smegmatis).